The following is a 171-amino-acid chain: PRA1-like protein (171 aa).

3 helical membrane-spanning segments follow: residues 67–87, 119–139, and 140–160; these read AIIA…LIVI, VILA…ETII, and WLVG…EPPV.

This sequence belongs to the PRA1 family.

Its subcellular location is the membrane. The polypeptide is PRA1-like protein (Schizosaccharomyces pombe (strain 972 / ATCC 24843) (Fission yeast)).